The following is a 566-amino-acid chain: MQPIISFEQFNFQYKHAAQPTVKDVTFHIYPGEKVLIAGRSGSGKSTLAHCMNGLIPFSYEGTSTGTILIDGKDPRKGSIFEQSKQVGTILQDQDAQFIGLTVEEDVAFYLENECVNEDDMKKIVSESLKKVKMHNFHKQSPHELSGGQKQTVSLAGLLTTNAHILLFDEPLANLDPVSSLHTVELIKDIHKQYNKTIVIIEHRIEEMLNLDLDKIILIDEGEIVAIGTPEKILASNILPSIGLREPMYIEGLKRLHFDSNNDVIYPLENLQRESVSGVINEWMEKQTFCKDTPTKKELLKVENLSFSYPNKQKVLDNVNFSLFKGEIVALLGHNGAGKSTLAHSLIGINKTKNDRILIDGVNINSWSIRKRGEVISYVMQNPNHMITQATVMEEISFSLKLKKFSKEEIKVRAEETLKICDLYPFRNWPIQALSYGQKKRLTIASVLTTNPKLIILDEPTAGQDYYHYKQFMTFIRKLAAKGLSFIFITHDMNLALEYADRAIVLKEGEVIANNTASIVLGHPETLKRANLKESSLFKLVKFSGIANPERFMELYFDDIRREEGV.

ABC transporter domains are found at residues 5–246 and 300–533; these read ISFE…GLRE and LKVE…ANLK. Residues 39–46 and 333–340 contribute to the ATP site; these read GRSGSGKS and GHNGAGKS.

It belongs to the ABC transporter superfamily.

It localises to the cell membrane. Functionally, probably part of an ABC transporter complex. Responsible for energy coupling to the transport system. The chain is Putative ABC transporter ATP-binding protein BCE_2668 from Bacillus cereus (strain ATCC 10987 / NRS 248).